The chain runs to 526 residues: Aspartate ammonia-lyase (526 aa).

The disordered stretch occupies residues 1–44 (MSKTSNKSSADSKNDAKAEDIVNGENQIATNESQSSDSAAVSER). The segment covering 10 to 20 (ADSKNDAKAED) has biased composition (basic and acidic residues). Positions 24–39 (GENQIATNESQSSDSA) are enriched in polar residues. 5 residues coordinate L-aspartate: T155, S194, T195, N196, and T241. The SS loop stretch occupies residues 371-380 (GSSIMPAKVN). Residue S372 is the Proton acceptor of the active site. L-aspartate contacts are provided by S373 and K378.

This sequence belongs to the class-II fumarase/aspartase family. Aspartase subfamily. Homotetramer.

The catalysed reaction is L-aspartate = fumarate + NH4(+). Functionally, catalyzes the reversible conversion of L-aspartate to fumarate and ammonia. The protein is Aspartate ammonia-lyase of Corynebacterium glutamicum (strain ATCC 13032 / DSM 20300 / JCM 1318 / BCRC 11384 / CCUG 27702 / LMG 3730 / NBRC 12168 / NCIMB 10025 / NRRL B-2784 / 534).